The following is a 204-amino-acid chain: Allurin (204 aa).

The N-terminal stretch at 1–19 is a signal peptide; that stretch reads MDTFNFIICISALFHSTYG. An SCP domain is found at 36-138; the sequence is VDLHNLLRRS…DKMIGHYTQV (103 aa). Residues 140-161 traverse the membrane as a helical segment; sequence WAKTYLLGCGLAFCPGNYYPYV.

Belongs to the CRISP family. In terms of tissue distribution, expressed only in oviduct.

The protein resides in the membrane. The protein localises to the secreted. In terms of biological role, involved in sperm chemoattraction. In Xenopus tropicalis (Western clawed frog), this protein is Allurin (crisp-a).